The following is an 86-amino-acid chain: Serine protease inhibitor Kazal-type 2 (86 aa).

Residues 1–16 (MLRLVLLLLATDFAAS) form the signal peptide. A Kazal-like domain is found at 32–86 (QFRTPDCHRFDYPVCSKHLSPVCGTDMNTYGNECTLCMKIREDGSHINIIKDEPC). Cystine bridges form between Cys-38–Cys-68, Cys-46–Cys-65, and Cys-54–Cys-86.

The protein localises to the secreted. It localises to the cytoplasmic vesicle. The protein resides in the secretory vesicle. Its subcellular location is the acrosome. Functionally, as a strong inhibitor of acrosin, it is required for normal spermiogenesis. It probably hinders premature activation of proacrosin and other proteases, thus preventing the cascade of events leading to spermiogenesis defects. May be involved in the regulation of serine protease-dependent germ cell apoptosis. It also inhibits trypsin. This chain is Serine protease inhibitor Kazal-type 2 (Spink2), found in Rattus norvegicus (Rat).